Here is a 154-residue protein sequence, read N- to C-terminus: MVLMGKSRVAIYTDGACSGNPGPGGWGAVLRFGDGGERRISGGSDDTTNNRMELTAVIMALAALSGPCSVCVNTDSTYVKNGITEWIRKWKLNGWRTSNKSAVKNVDLWVELERLTLLHSIEWRWVKAHAGNEYNEEADMLARGEVERRMVIPK.

The RNase H type-1 domain maps to 5 to 147 (GKSRVAIYTD…ADMLARGEVE (143 aa)). Residues Asp-14, Glu-53, Asp-75, and Asp-139 each contribute to the Mg(2+) site.

It belongs to the RNase H family. As to quaternary structure, monomer. Mg(2+) is required as a cofactor.

The protein localises to the cytoplasm. It carries out the reaction Endonucleolytic cleavage to 5'-phosphomonoester.. Its function is as follows. Endonuclease that specifically degrades the RNA of RNA-DNA hybrids. This Anaplasma marginale (strain St. Maries) protein is Ribonuclease H.